A 408-amino-acid polypeptide reads, in one-letter code: Multifunctional CCA protein (408 aa).

G8 and R11 together coordinate ATP. Residues G8 and R11 each contribute to the CTP site. Residues D21 and D23 each contribute to the Mg(2+) site. Positions 91, 137, and 140 each coordinate ATP. CTP-binding residues include R91, R137, and R140. Positions 228–329 (TGVHVLSVLE…LELLQSFDVY (102 aa)) constitute an HD domain.

It belongs to the tRNA nucleotidyltransferase/poly(A) polymerase family. Bacterial CCA-adding enzyme type 1 subfamily. In terms of assembly, monomer. Can also form homodimers and oligomers. Mg(2+) serves as cofactor. It depends on Ni(2+) as a cofactor.

The catalysed reaction is a tRNA precursor + 2 CTP + ATP = a tRNA with a 3' CCA end + 3 diphosphate. The enzyme catalyses a tRNA with a 3' CCA end + 2 CTP + ATP = a tRNA with a 3' CCACCA end + 3 diphosphate. In terms of biological role, catalyzes the addition and repair of the essential 3'-terminal CCA sequence in tRNAs without using a nucleic acid template. Adds these three nucleotides in the order of C, C, and A to the tRNA nucleotide-73, using CTP and ATP as substrates and producing inorganic pyrophosphate. tRNA 3'-terminal CCA addition is required both for tRNA processing and repair. Also involved in tRNA surveillance by mediating tandem CCA addition to generate a CCACCA at the 3' terminus of unstable tRNAs. While stable tRNAs receive only 3'-terminal CCA, unstable tRNAs are marked with CCACCA and rapidly degraded. The sequence is that of Multifunctional CCA protein from Pseudomonas syringae pv. syringae (strain B728a).